Reading from the N-terminus, the 1337-residue chain is Activated Cdc42 kinase-like (1337 aa).

Serine 71 carries the phosphoserine modification. The Protein kinase domain occupies 133–399; it reads ISVNKQLGTG…GEIYDQLPDM (267 aa). ATP contacts are provided by residues 139-147 and lysine 164; that span reads LGTGEFGIV. Aspartate 260 acts as the Proton acceptor in catalysis. Phosphotyrosine occurs at positions 291 and 292. Residues 399-460 enclose the SH3 domain; that stretch reads MKPEQLKAVV…NPSNTVAFLE (62 aa). Residues 488–502 enclose the CRIB domain; sequence ISKPQNDFKHTGHVG. The interval 714-739 is disordered; that stretch reads SGDTNGNKHGHGLLPTLSKKKSSGTV. Serine 764 and serine 778 each carry phosphoserine. The interval 786 to 822 is disordered; it reads RFPHLSNNGSGDKSGGLGTSGSAHTPTHGNASPFPKK. A compositionally biased stretch (polar residues) spans 805–815; it reads SGSAHTPTHGN. Serine 831, serine 918, and serine 924 each carry phosphoserine. 2 disordered regions span residues 906–969 and 1024–1045; these read AGLS…TSTK and PSGM…PTVG. Positions 947-957 are enriched in pro residues; sequence PESPNPIPLPP.

It belongs to the protein kinase superfamily. Tyr protein kinase family.

It carries out the reaction L-tyrosyl-[protein] + ATP = O-phospho-L-tyrosyl-[protein] + ADP + H(+). Functionally, likely to act as a downstream effector of Cdc42 during dorsal closure, acting in a kinase independent manner with the other ACK family member Ack to positively regulate expression of the myosin zip by promoting the endocytosis of Egfr in the amnioserosa (AS). The polypeptide is Activated Cdc42 kinase-like (Drosophila melanogaster (Fruit fly)).